We begin with the raw amino-acid sequence, 68 residues long: UPF0291 protein TTE2340 (68 aa).

The protein belongs to the UPF0291 family.

The protein localises to the cytoplasm. This chain is UPF0291 protein TTE2340, found in Caldanaerobacter subterraneus subsp. tengcongensis (strain DSM 15242 / JCM 11007 / NBRC 100824 / MB4) (Thermoanaerobacter tengcongensis).